The chain runs to 932 residues: GPI ethanolamine phosphate transferase 1 (932 aa).

Topologically, residues 1-8 (MISLNKKL) are cytoplasmic. Residues 9 to 29 (VLLVGVIFHVAFMWSIFDIYF) form a helical membrane-spanning segment. Over 30–456 (VSPLIHGMKH…TYNWLFLRTL (427 aa)) the chain is Lumenal. N-linked (GlcNAc...) asparagine glycosylation is found at asparagine 138, asparagine 202, and asparagine 360. A helical transmembrane segment spans residues 457 to 477 (VTIGFFGWIAVAFCSYLLAFV). Residues 478–486 (VQSDKPFTT) lie on the Cytoplasmic side of the membrane. Residues 487–507 (SLPLKGVAYVALAILSGFFVF) form a helical membrane-spanning segment. Residues 508–509 (QK) are Lumenal-facing. Residues 510 to 530 (SPLHYHLYAVFPVVFWEAVLQ) form a helical membrane-spanning segment. Over 531–551 (RRTAVAEGISILARRSTSKAP) the chain is Cytoplasmic. The chain crosses the membrane as a helical span at residues 552–572 (ALAAILDIGLSLVLLEAIVYG). Over 573-577 (YFHRE) the chain is Lumenal. The chain crosses the membrane as a helical span at residues 578-598 (IFSVCFGLATLWPFVHNFTVA). Residues 599–603 (KREWP) lie on the Cytoplasmic side of the membrane. A helical membrane pass occupies residues 604–624 (TTLAWVVMCAIMSSFTLLEVV). The Lumenal segment spans residues 625 to 627 (KVE). Residues 628-648 (SIEQILLSGALMLVIGLVFTI) traverse the membrane as a helical segment. Over 649 to 653 (HLQRK) the chain is Cytoplasmic. The chain crosses the membrane as a helical span at residues 654-674 (LALAASTVCVLFAQILLVVAT). At 675–696 (MYFTRESVESLTARNGLPLFSQ) the chain is on the lumenal side. The helical transmembrane segment at 697–717 (VGGWISLLLSLAVPFLHFLGS) threads the bilayer. Residues 718–737 (DAKDYRLRLLIIFLAFGPTF) are Cytoplasmic-facing. A helical membrane pass occupies residues 738 to 758 (VILTISWEGFFYVCFFAILVI). Residues 759-786 (WIELETQMRDARVTPQTRADLTPGDFRM) are Lumenal-facing. A helical membrane pass occupies residues 787–807 (ALFTFFMSQIGFFGIGNIASI). Over 808 to 828 (SSFSLDSVYRLIPVFDPFSMG) the chain is Cytoplasmic. A helical transmembrane segment spans residues 829–849 (ALLMFKILVPFAVLSACLGIL). Topologically, residues 850-859 (NLKLGVPPSA) are lumenal. A helical membrane pass occupies residues 860–880 (LFSMVLCVSDILTLNFFYLVV). The Cytoplasmic portion of the chain corresponds to 881–900 (DEGSWLDIGTGISHYCIASG). Residues 901-921 (LSLFMMVLEYLSGVLVAGVTI) form a helical membrane-spanning segment. Residues 922 to 932 (APHVSKIKKDM) lie on the Lumenal side of the membrane.

Belongs to the PIGG/PIGN/PIGO family. PIGN subfamily.

Its subcellular location is the endoplasmic reticulum membrane. The protein operates within glycolipid biosynthesis; glycosylphosphatidylinositol-anchor biosynthesis. Its function is as follows. Ethanolamine phosphate transferase involved in glycosylphosphatidylinositol-anchor biosynthesis. Transfers ethanolamine phosphate to the first alpha-1,4-linked mannose of the glycosylphosphatidylinositol precursor of GPI-anchor. In Yarrowia lipolytica (strain CLIB 122 / E 150) (Yeast), this protein is GPI ethanolamine phosphate transferase 1 (MCD4).